The following is a 206-amino-acid chain: Large ribosomal subunit protein uL4 (206 aa).

The disordered stretch occupies residues 63–97 (MYKQKGTGRARHHSARAPQFRGGGKAHGPVVRSHE). Positions 64-77 (YKQKGTGRARHHSA) are enriched in basic residues.

This sequence belongs to the universal ribosomal protein uL4 family. As to quaternary structure, part of the 50S ribosomal subunit.

In terms of biological role, one of the primary rRNA binding proteins, this protein initially binds near the 5'-end of the 23S rRNA. It is important during the early stages of 50S assembly. It makes multiple contacts with different domains of the 23S rRNA in the assembled 50S subunit and ribosome. Forms part of the polypeptide exit tunnel. This is Large ribosomal subunit protein uL4 from Rhizobium johnstonii (strain DSM 114642 / LMG 32736 / 3841) (Rhizobium leguminosarum bv. viciae).